The chain runs to 167 residues: Large ribosomal subunit protein uL10 (167 aa).

It belongs to the universal ribosomal protein uL10 family. Part of the ribosomal stalk of the 50S ribosomal subunit. The N-terminus interacts with L11 and the large rRNA to form the base of the stalk. The C-terminus forms an elongated spine to which L12 dimers bind in a sequential fashion forming a multimeric L10(L12)X complex.

In terms of biological role, forms part of the ribosomal stalk, playing a central role in the interaction of the ribosome with GTP-bound translation factors. This chain is Large ribosomal subunit protein uL10, found in Alkaliphilus oremlandii (strain OhILAs) (Clostridium oremlandii (strain OhILAs)).